The chain runs to 92 residues: Small ribosomal subunit protein uS19 (92 aa).

Belongs to the universal ribosomal protein uS19 family.

Protein S19 forms a complex with S13 that binds strongly to the 16S ribosomal RNA. This Bradyrhizobium sp. (strain BTAi1 / ATCC BAA-1182) protein is Small ribosomal subunit protein uS19.